A 406-amino-acid chain; its full sequence is S-adenosylmethionine synthase (406 aa).

ATP is bound at residue histidine 17. Aspartate 19 serves as a coordination point for Mg(2+). Position 45 (glutamate 45) interacts with K(+). L-methionine is bound by residues glutamate 58 and glutamine 101. A flexible loop region spans residues 101–111 (QSAEINQGVAR). Residues 178-180 (DGK), aspartate 258, 264-265 (RK), alanine 281, and lysine 285 each bind ATP. Aspartate 258 is an L-methionine binding site. Lysine 289 is a binding site for L-methionine.

Belongs to the AdoMet synthase family. As to quaternary structure, homotetramer; dimer of dimers. Mg(2+) serves as cofactor. K(+) is required as a cofactor.

The protein resides in the cytoplasm. The catalysed reaction is L-methionine + ATP + H2O = S-adenosyl-L-methionine + phosphate + diphosphate. It participates in amino-acid biosynthesis; S-adenosyl-L-methionine biosynthesis; S-adenosyl-L-methionine from L-methionine: step 1/1. Catalyzes the formation of S-adenosylmethionine (AdoMet) from methionine and ATP. The overall synthetic reaction is composed of two sequential steps, AdoMet formation and the subsequent tripolyphosphate hydrolysis which occurs prior to release of AdoMet from the enzyme. In Bifidobacterium longum (strain NCC 2705), this protein is S-adenosylmethionine synthase.